Consider the following 160-residue polypeptide: uncharacterized protein (160 aa).

Residues 1 to 25 (MKVTLLLLLIAVLLLLLIFMKVCKQ) form the signal peptide.

This is an uncharacterized protein from Invertebrate iridescent virus 6 (IIV-6).